A 130-amino-acid chain; its full sequence is Iron-sulfur cluster insertion protein ErpA (130 aa).

Residues cysteine 58, cysteine 122, and cysteine 124 each contribute to the iron-sulfur cluster site.

This sequence belongs to the HesB/IscA family. As to quaternary structure, homodimer. Requires iron-sulfur cluster as cofactor.

Required for insertion of 4Fe-4S clusters for at least IspG. This chain is Iron-sulfur cluster insertion protein ErpA, found in Stenotrophomonas maltophilia (strain R551-3).